The primary structure comprises 267 residues: Short-chain dehydrogenase/reductase GME11361 (267 aa).

NADP(+) is bound by residues Ile-10, Thr-36, Lys-42, Asp-57, Asn-80, Tyr-129, Lys-133, Val-162, and Ser-164. The active-site Proton acceptor is the Tyr-129. Lys-133 functions as the Lowers pKa of active site Tyr in the catalytic mechanism.

It belongs to the short-chain dehydrogenases/reductases (SDR) family.

The protein operates within secondary metabolite biosynthesis. Short-chain dehydrogenase/reductase; part of the gene cluster that mediates the biosynthesis of dibenzodioxocinones such as pestalotiollide B, a novel class of inhibitors against cholesterol ester transfer protein (CEPT). The biosynthesis initiates from condensation of acetate and malonate units catalyzed by the non-reducing PKS pks8/GME11356. Pks8/GME11356 lacks a thioesterase (TE) domain, which is important to the cyclizing of the third ring of atrochrysone carboxylic acid, and the esterase GME11355 might play the role of TE and catalyzes the cyclization reaction of the C ring. The lactamase-like protein GME11357 (or other beta-lactamases in Pestalotiopsis microspora) probably hydrolyzes the thioester bond between the ACP of pks8/GME11356 and the intermediate to release atrochrysone carboxylic acid, which is spontaneously dehydrates to form endocrocin anthrone. Endocrocin anthrone is further converted to emodin via the endocrocin intermediate. Emodin is then oxidized by several enzymes such as the Baeyer-Villiger oxidase GME11358, the oxidoreductase GME11367, the short chain dehydrogenase/reductase GME11373, as well as by other oxidoreductases from the cluster, to modify the A and C rings and open the B ring, and finally yield monodictyphenone. The prenyltransferase GME11375 may catalyze the addition reaction between the C5 side chains and the carbon bone of dibenzodioxocinones. The remaining biochemical reactions to the final product dibenzodioxocinones should be methylation catalyzed by methyltransferase GME11366 and reduction and lactonization reaction catalyzed by a series of oxidordeuctases. This is Short-chain dehydrogenase/reductase GME11361 from Pestalotiopsis microspora.